A 255-amino-acid polypeptide reads, in one-letter code: Type III pantothenate kinase (255 aa).

Residue 6–13 (DIGNSNIV) participates in ATP binding. Substrate contacts are provided by residues Y100 and 107 to 110 (GSDR). D109 serves as the catalytic Proton acceptor. Residue D129 coordinates K(+). Residue T132 coordinates ATP. T184 provides a ligand contact to substrate.

Belongs to the type III pantothenate kinase family. As to quaternary structure, homodimer. NH4(+) is required as a cofactor. The cofactor is K(+).

It localises to the cytoplasm. The enzyme catalyses (R)-pantothenate + ATP = (R)-4'-phosphopantothenate + ADP + H(+). The protein operates within cofactor biosynthesis; coenzyme A biosynthesis; CoA from (R)-pantothenate: step 1/5. Its function is as follows. Catalyzes the phosphorylation of pantothenate (Pan), the first step in CoA biosynthesis. This Brevibacillus brevis (strain 47 / JCM 6285 / NBRC 100599) protein is Type III pantothenate kinase.